We begin with the raw amino-acid sequence, 231 residues long: NDR1/HIN1-like protein 3 (231 aa).

The helical transmembrane segment at valine 47–tryptophan 67 threads the bilayer. N-linked (GlcNAc...) asparagine glycosylation is found at asparagine 102, asparagine 135, asparagine 145, and asparagine 215.

May form oligomers or be a component of larger protein complex in plasma membranes. In terms of processing, glycosylated. As to expression, expressed in roots, young and senescing leaves, cauline leaves, stems and siliques.

The protein resides in the cell membrane. Its function is as follows. Confers resistance to Pseudomonas syringae pv. tomato DC3000 (Pst DC3000). This is NDR1/HIN1-like protein 3 from Arabidopsis thaliana (Mouse-ear cress).